We begin with the raw amino-acid sequence, 337 residues long: RNA 3'-terminal phosphate cyclase (337 aa).

Residues glutamine 100 and 281–285 (YMGDQ) contribute to the ATP site. The active-site Tele-AMP-histidine intermediate is the histidine 306.

This sequence belongs to the RNA 3'-terminal cyclase family. Type 1 subfamily.

It localises to the cytoplasm. It catalyses the reaction a 3'-end 3'-phospho-ribonucleotide-RNA + ATP = a 3'-end 2',3'-cyclophospho-ribonucleotide-RNA + AMP + diphosphate. Functionally, catalyzes the conversion of 3'-phosphate to a 2',3'-cyclic phosphodiester at the end of RNA. The mechanism of action of the enzyme occurs in 3 steps: (A) adenylation of the enzyme by ATP; (B) transfer of adenylate to an RNA-N3'P to produce RNA-N3'PP5'A; (C) and attack of the adjacent 2'-hydroxyl on the 3'-phosphorus in the diester linkage to produce the cyclic end product. The biological role of this enzyme is unknown but it is likely to function in some aspects of cellular RNA processing. The sequence is that of RNA 3'-terminal phosphate cyclase (rtcA) from Methanothermobacter thermautotrophicus (strain ATCC 29096 / DSM 1053 / JCM 10044 / NBRC 100330 / Delta H) (Methanobacterium thermoautotrophicum).